The primary structure comprises 548 residues: Probable malate:quinone oxidoreductase (548 aa).

The interval 520 to 548 (YDRPQAADSTPKPQLKPQPVQKEVADIAL) is disordered. The span at 530-541 (PKPQLKPQPVQK) shows a compositional bias: low complexity.

It belongs to the MQO family. Requires FAD as cofactor.

The enzyme catalyses (S)-malate + a quinone = a quinol + oxaloacetate. It functions in the pathway carbohydrate metabolism; tricarboxylic acid cycle; oxaloacetate from (S)-malate (quinone route): step 1/1. The chain is Probable malate:quinone oxidoreductase from Shigella dysenteriae serotype 1 (strain Sd197).